A 264-amino-acid polypeptide reads, in one-letter code: Proteasome assembly chaperone 2 (264 aa).

Threonine 137 carries the phosphothreonine modification.

It belongs to the PSMG2 family. As to quaternary structure, forms a heterodimer with PSMG1. The PSMG1-PSMG2 heterodimer interacts directly with the PSMA5 and PSMA7 proteasome alpha subunits. Post-translationally, degraded by the proteasome upon completion of 20S proteasome maturation.

It is found in the nucleus. Functionally, chaperone protein which promotes assembly of the 20S proteasome as part of a heterodimer with PSMG1. The PSMG1-PSMG2 heterodimer binds to the PSMA5 and PSMA7 proteasome subunits, promotes assembly of the proteasome alpha subunits into the heteroheptameric alpha ring and prevents alpha ring dimerization. The chain is Proteasome assembly chaperone 2 from Bos taurus (Bovine).